Consider the following 186-residue polypeptide: ATP synthase subunit delta (186 aa).

Belongs to the ATPase delta chain family. As to quaternary structure, F-type ATPases have 2 components, F(1) - the catalytic core - and F(0) - the membrane proton channel. F(1) has five subunits: alpha(3), beta(3), gamma(1), delta(1), epsilon(1). F(0) has three main subunits: a(1), b(2) and c(10-14). The alpha and beta chains form an alternating ring which encloses part of the gamma chain. F(1) is attached to F(0) by a central stalk formed by the gamma and epsilon chains, while a peripheral stalk is formed by the delta and b chains.

It localises to the cell inner membrane. Functionally, f(1)F(0) ATP synthase produces ATP from ADP in the presence of a proton or sodium gradient. F-type ATPases consist of two structural domains, F(1) containing the extramembraneous catalytic core and F(0) containing the membrane proton channel, linked together by a central stalk and a peripheral stalk. During catalysis, ATP synthesis in the catalytic domain of F(1) is coupled via a rotary mechanism of the central stalk subunits to proton translocation. In terms of biological role, this protein is part of the stalk that links CF(0) to CF(1). It either transmits conformational changes from CF(0) to CF(1) or is implicated in proton conduction. This chain is ATP synthase subunit delta, found in Nitrobacter hamburgensis (strain DSM 10229 / NCIMB 13809 / X14).